Reading from the N-terminus, the 185-residue chain is Small ribosomal subunit protein uS5 (185 aa).

Residues 18 to 81 (FVDKLVHINR…ESAKRALIRV (64 aa)) enclose the S5 DRBM domain.

The protein belongs to the universal ribosomal protein uS5 family. Part of the 30S ribosomal subunit. Contacts proteins S4 and S8.

In terms of biological role, with S4 and S12 plays an important role in translational accuracy. Functionally, located at the back of the 30S subunit body where it stabilizes the conformation of the head with respect to the body. This chain is Small ribosomal subunit protein uS5, found in Azorhizobium caulinodans (strain ATCC 43989 / DSM 5975 / JCM 20966 / LMG 6465 / NBRC 14845 / NCIMB 13405 / ORS 571).